Here is a 198-residue protein sequence, read N- to C-terminus: Suppressor of cytokine signaling 2 (198 aa).

A disordered region spans residues 1 to 29 (MTLRCLEPSGNGADRTRSQWGTAGLPEEQ). Positions 1–75 (MTLRCLEPSG…PEGTFLIRDS (75 aa)) are interaction with AREL1. At Ser-30 the chain carries Phosphoserine. Residues 48–156 (WYWGSMTVNE…TVHLYLTKPL (109 aa)) enclose the SH2 domain. Residue Ser-52 is modified to Phosphoserine; by PKC. Residues 151 to 197 (YLTKPLYTSAPTLQHFCRLAINKCTGTIWGLPLPTRLKDYLEEYKFQ) form the SOCS box domain. Residue Lys-173 forms a Glycyl lysine isopeptide (Lys-Gly) (interchain with G-Cter in ubiquitin) linkage.

In terms of assembly, substrate-recognition component of the ECS(SOCS2) complex, composed of SOCS2, CUL5, ELOB, ELOC and RNF7/RBX2. Interacts with IGF1R. Interacts with DCUN1D1. Ubiquitinated; mediated by AREL1 and leading to its subsequent proteasomal degradation. Ubiquitination is dependent on phosphorylation at Ser-52, by PKC and is stimulated by LPS. Post-translationally, phosphorylation at Ser-52 by PKC facilitates its ubiquitination and proteasomal degradation. As to expression, expressed primarily in the testis, some expression in liver and lung.

It localises to the cytoplasm. The protein operates within protein modification; protein ubiquitination. In terms of biological role, substrate-recognition component of a cullin-5-RING E3 ubiquitin-protein ligase complex (ECS complex, also named CRL5 complex), which mediates the ubiquitination and subsequent proteasomal degradation of target proteins, such as EPOR and GHR. Specifically recognizes and binds phosphorylated proteins via its SH2 domain, promoting their ubiquitination. The ECS(SOCS2) complex acts as a key regulator of growth hormone receptor (GHR) levels by mediating ubiquitination and degradation of GHR, following GHR phosphorylation by JAK2. The ECS(SOCS2) also catalyzes ubiquitination and degradation of JAK2-phosphorylated EPOR. The chain is Suppressor of cytokine signaling 2 from Mus musculus (Mouse).